The chain runs to 402 residues: Putative cytochrome P450 123 (402 aa).

Residue C350 coordinates heme.

Belongs to the cytochrome P450 family. The cofactor is heme.

This chain is Putative cytochrome P450 123 (cyp123), found in Mycobacterium bovis (strain ATCC BAA-935 / AF2122/97).